The sequence spans 147 residues: Hemoglobin subunit beta (147 aa).

Residues 3–147 form the Globin domain; it reads HWTAEEKQLI…VAHALARKYH (145 aa). Residues histidine 64 and histidine 93 each contribute to the heme b site.

It belongs to the globin family. In terms of assembly, heterotetramer of 2 alpha (or alpha-D) and 2 beta chains. Red blood cells.

Involved in oxygen transport from the lung to the various peripheral tissues. The beta chain is a component of adult hemoglobin A and D. In Gallus gallus (Chicken), this protein is Hemoglobin subunit beta (HBB).